A 396-amino-acid polypeptide reads, in one-letter code: 2-(3-amino-3-carboxypropyl)histidine synthase subunit 1 (396 aa).

Residues Cys-89, Cys-194, and Cys-323 each coordinate [4Fe-4S] cluster. The interval 372–396 is disordered; it reads TNNNEANRPKREKRKPHIVVRTEAS.

Belongs to the DPH1/DPH2 family. DPH1 subfamily. Component of the 2-(3-amino-3-carboxypropyl)histidine synthase complex composed of dph-1, dph-2, dph-3 and a NADH-dependent reductase. [4Fe-4S] cluster is required as a cofactor.

The enzyme catalyses L-histidyl-[translation elongation factor 2] + S-adenosyl-L-methionine = 2-[(3S)-amino-3-carboxypropyl]-L-histidyl-[translation elongation factor 2] + S-methyl-5'-thioadenosine + H(+). The protein operates within protein modification; peptidyl-diphthamide biosynthesis. Its function is as follows. Catalyzes the first step of diphthamide biosynthesis, a post-translational modification of histidine which occurs in elongation factor 2. Dph-1 and dph-2 transfer a 3-amino-3-carboxypropyl (ACP) group from S-adenosyl-L-methionine (SAM) to a histidine residue, the reaction is assisted by a reduction system comprising dph-3 and a NADH-dependent reductase. This chain is 2-(3-amino-3-carboxypropyl)histidine synthase subunit 1 (dph-1), found in Caenorhabditis elegans.